The chain runs to 630 residues: Plastin-1 (630 aa).

N-acetylmethionine is present on M1. 2 EF-hand domains span residues 11 to 46 (EELEELQEAFNKIDIDNSGYVSDYELQDLFKEASLP) and 51 to 86 (KVREIVEKILAVADNNKDSRISFEEFVSLMQELKSK). Ca(2+)-binding residues include D24, D26, S28, Y30, E35, D64, N66, D68, R70, and E75. Actin-binding regions lie at residues 108–381 (TSSI…GLHK) and 382–626 (PDNN…GKGL). 4 Calponin-homology (CH) domains span residues 122 to 238 (EEEK…KVGL), 266 to 377 (LSPE…NTYP), 396 to 505 (SKEE…RRYT), and 517 to 626 (KVND…GKGL).

Monomer. Post-translationally, phosphorylated.

It localises to the cytoplasm. The protein resides in the cell projection. Its subcellular location is the stereocilium. Its function is as follows. Actin-bundling protein. In the inner ear, it is required for stereocilia formation. Mediates liquid packing of actin filaments that is necessary for stereocilia to grow to their proper dimensions. This Bos taurus (Bovine) protein is Plastin-1 (PLS1).